The chain runs to 248 residues: Pyridoxine 5'-phosphate synthase (248 aa).

Position 7 (N7) interacts with 3-amino-2-oxopropyl phosphate. Position 9-10 (9-10) interacts with 1-deoxy-D-xylulose 5-phosphate; that stretch reads DH. R18 serves as a coordination point for 3-amino-2-oxopropyl phosphate. H52 (proton acceptor) is an active-site residue. 1-deoxy-D-xylulose 5-phosphate contacts are provided by R54 and H59. The Proton acceptor role is filled by E79. Residue T109 coordinates 1-deoxy-D-xylulose 5-phosphate. H201 functions as the Proton donor in the catalytic mechanism. Residues G202 and 223–224 contribute to the 3-amino-2-oxopropyl phosphate site; that span reads GH.

The protein belongs to the PNP synthase family. In terms of assembly, homooctamer; tetramer of dimers.

It localises to the cytoplasm. The catalysed reaction is 3-amino-2-oxopropyl phosphate + 1-deoxy-D-xylulose 5-phosphate = pyridoxine 5'-phosphate + phosphate + 2 H2O + H(+). Its pathway is cofactor biosynthesis; pyridoxine 5'-phosphate biosynthesis; pyridoxine 5'-phosphate from D-erythrose 4-phosphate: step 5/5. Functionally, catalyzes the complicated ring closure reaction between the two acyclic compounds 1-deoxy-D-xylulose-5-phosphate (DXP) and 3-amino-2-oxopropyl phosphate (1-amino-acetone-3-phosphate or AAP) to form pyridoxine 5'-phosphate (PNP) and inorganic phosphate. The polypeptide is Pyridoxine 5'-phosphate synthase (Opitutus terrae (strain DSM 11246 / JCM 15787 / PB90-1)).